Reading from the N-terminus, the 346-residue chain is Methylthioribose-1-phosphate isomerase (346 aa).

Residues 46–48, arginine 89, and glutamine 196 contribute to the substrate site; that span reads RGA. Residue aspartate 237 is the Proton donor of the active site. 247–248 is a substrate binding site; sequence NK.

This sequence belongs to the eIF-2B alpha/beta/delta subunits family. MtnA subfamily.

The catalysed reaction is 5-(methylsulfanyl)-alpha-D-ribose 1-phosphate = 5-(methylsulfanyl)-D-ribulose 1-phosphate. The protein operates within amino-acid biosynthesis; L-methionine biosynthesis via salvage pathway; L-methionine from S-methyl-5-thio-alpha-D-ribose 1-phosphate: step 1/6. Its function is as follows. Catalyzes the interconversion of methylthioribose-1-phosphate (MTR-1-P) into methylthioribulose-1-phosphate (MTRu-1-P). In Geotalea uraniireducens (strain Rf4) (Geobacter uraniireducens), this protein is Methylthioribose-1-phosphate isomerase.